The following is a 129-amino-acid chain: uncharacterized protein (129 aa).

The signal sequence occupies residues methionine 1–alanine 20.

This is an uncharacterized protein from Saccharomyces cerevisiae (strain ATCC 204508 / S288c) (Baker's yeast).